The chain runs to 341 residues: MMIQEELEATKQQFCIELDQVHSSKDLFDLKVRYLGKKGLFRCFADKLRECPSDQKALMGASINACKTYIEDLIRDKNNAILLAEESAEFLKEKIDITLPGEPQCPGGKHIVKKVLDDVVDIFVHLGFCVREAPNIESEENNFSLLNFEENHPARQMHDTFYLDAKTVLRTHTSNVQVRELSRGEPPIKVVAPGLCFRNEDISARSHVIFHQVEAFYVDRNVTLSDLTEMLTEFYHTFFERKIELRLRHSYFPFVEPGIEVDVSCECQAAGCSLCKHTGWLEVAGAGMIHPQVLRNSGVDPETYTGYAVGMGIERLAMLKHGISDIRLFCENDLRFLQQFS.

Glutamate 256 provides a ligand contact to Mg(2+).

The protein belongs to the class-II aminoacyl-tRNA synthetase family. Phe-tRNA synthetase alpha subunit type 1 subfamily. In terms of assembly, tetramer of two alpha and two beta subunits. Mg(2+) is required as a cofactor.

It localises to the cytoplasm. The enzyme catalyses tRNA(Phe) + L-phenylalanine + ATP = L-phenylalanyl-tRNA(Phe) + AMP + diphosphate + H(+). The chain is Phenylalanine--tRNA ligase alpha subunit from Chlamydia caviae (strain ATCC VR-813 / DSM 19441 / 03DC25 / GPIC) (Chlamydophila caviae).